Here is a 405-residue protein sequence, read N- to C-terminus: MSQSIKLFSVLSDQFQNNPYAYFSQLREEDPVHYEESIDSYFISRYHDVRYILQHPDIFTTKSLVERAEPVMRGPVLAQMHGKEHSAKRRIVVRSFIGDALDHLSPLIKQNAENLLAPYLERGKSDLVNDFGKTFAVCVTMDMLGLDKRDHEKISEWHSGVADFITSISQSPEARAHSLWCSEQLSQYLMPVIKERRVNPGSDLISILCTSEYEGMALSDKDILALILNVLLAATEPADKTLALMIYHLLNNPEQMNDVLADRSLVPRAIAETLRYKPPVQLIPRQLSQDTVVGGMEIKKDTIVFCMIGAANRDPEAFEQPDVFNIHREDLGIKSAFSGAARHLAFGSGIHNCVGAAFAKNEIEIVANIVLDKMRNIRLEEDFCYAESGLYTRGPVSLLVAFDGA.

Heme is bound by residues K62, N229, R285, and C353.

Belongs to the cytochrome P450 family. As to quaternary structure, homodimer. The cofactor is heme.

The catalysed reaction is cyclo(L-leucyl-L-leucyl) + 6 reduced [2Fe-2S]-[ferredoxin] + 3 O2 + 4 H(+) = pulcherriminic acid + 6 oxidized [2Fe-2S]-[ferredoxin] + 4 H2O. Involved in the biosynthesis of pulcherrimin, a red extracellular pigment. Catalyzes the oxidation of cyclo(L-Leu-L-Leu) (cLL) to yield pulcherriminic acid which forms pulcherrimin via a nonenzymic reaction with Fe(3+). Substrates with small alkyl groups (cAA, cLG, cLP) exhibit weaker binding to CYP134A1, but substrates with larger hydrophobic side chains bind in a similar regime to cLL. This chain is Pulcherriminic acid synthase (cypX), found in Bacillus subtilis (strain 168).